We begin with the raw amino-acid sequence, 40 residues long: Photosystem II reaction center protein J (40 aa).

Residues 8 to 28 form a helical membrane-spanning segment; sequence IPLWLVALVAGTGVLVVVGLF.

It belongs to the PsbJ family. PSII is composed of 1 copy each of membrane proteins PsbA, PsbB, PsbC, PsbD, PsbE, PsbF, PsbH, PsbI, PsbJ, PsbK, PsbL, PsbM, PsbT, PsbX, PsbY, PsbZ, Psb30/Ycf12, peripheral proteins PsbO, CyanoQ (PsbQ), PsbU, PsbV and a large number of cofactors. It forms dimeric complexes.

It is found in the cellular thylakoid membrane. In terms of biological role, one of the components of the core complex of photosystem II (PSII). PSII is a light-driven water:plastoquinone oxidoreductase that uses light energy to abstract electrons from H(2)O, generating O(2) and a proton gradient subsequently used for ATP formation. It consists of a core antenna complex that captures photons, and an electron transfer chain that converts photonic excitation into a charge separation. This Trichodesmium erythraeum (strain IMS101) protein is Photosystem II reaction center protein J.